A 147-amino-acid polypeptide reads, in one-letter code: Microtubule-associated protein 1 light chain 3 gamma (147 aa).

S93 and S96 each carry phosphoserine; by TBK1. A lipid anchor (Phosphatidylethanolamine amidated glycine; alternate) is attached at G126. The Phosphatidylserine amidated glycine; alternate moiety is linked to residue G126. Positions 127–147 are cleaved as a propeptide — removed in mature form; that stretch reads CLESAAPRDGSSLEDRPCNPL.

The protein belongs to the ATG8 family. As to quaternary structure, 3 different light chains, LC1 (a cleavage product of MAP1B), LC2 (a cleavage product of MAP1A) and LC3 (produced by one of the MAP1LC3 genes), can associate with the MAP1A or MAP1B heavy chains. Interacts with TP53INP1 and TP53INP2. Interacts with CALCOCO2. Interacts with TECPR2. Interacts with TBC1D5. Found in a complex with UBQLN1 and UBQLN2. Interacts with UBQLN4 (via STI1 1 and 2 domains). Interacts with UBQLN1 in the presence of UBQLN4. Interacts with TRIM5. Interacts with ATG13. Interacts with MEFV and TRIM21. Interacts with WDR81; recruits MAP1LC3C to ubiquitinated protein aggregates in the aggrephagy process. Interacts with MOAP1 (via LIR motif). Interacts with reticulophagy regulators RETREG1, RETREG2 and RETREG3. Interacts with TAX1BP1. Interacts with IRGM. Interacts with SPART. In terms of processing, the precursor molecule is cleaved by ATG4 (ATG4A, ATG4B, ATG4C or ATG4D) to expose the glycine at the C-terminus and form the cytosolic form, LC3-I. The processed form is then activated by APG7L/ATG7, transferred to ATG3 and conjugated to phosphatidylethanolamine (PE) phospholipid to form the membrane-bound form, LC3-II. During non-canonical autophagy, the processed form is conjugated to phosphatidylserine (PS) phospholipid. ATG4 proteins also mediate the delipidation of PE-conjugated forms. In addition, ATG4B and ATG4D mediate delipidation of ATG8 proteins conjugated to PS during non-canonical autophagy. Post-translationally, (Microbial infection) The Legionella effector RavZ is a deconjugating enzyme that hydrolyzes the amide bond between the C-terminal glycine residue and an adjacent aromatic residue in ATG8 proteins conjugated to phosphatidylethanolamine (PE), producing an ATG8 protein that is resistant to reconjugation by the host machinery due to the cleavage of the reactive C-terminal glycine. RavZ is also able to mediate delipidation of ATG8 proteins conjugated to phosphatidylserine (PS). Phosphorylation at Ser-96 and Ser-98 by TBK1 prevents interaction with ATG4 (ATG4A, ATG4B, ATG4C or ATG4D). Phosphorylation by TBK1 on autophagosomes prevents their delipidation by ATG4 and premature removal from nascent autophagosomes. In terms of tissue distribution, most abundant in placenta, lung and ovary.

It is found in the cytoplasmic vesicle. Its subcellular location is the autophagosome membrane. The protein resides in the endomembrane system. The protein localises to the cytoplasm. It localises to the cytoskeleton. Ubiquitin-like modifier that plays a crucial role in antibacterial autophagy (xenophagy) through the selective binding of CALCOCO2. Recruits all ATG8 family members to infecting bacteria such as S.typhimurium. May also play a role in aggrephagy, the macroautophagic degradation of ubiquitinated and aggregated proteins. This chain is Microtubule-associated protein 1 light chain 3 gamma (MAP1LC3C), found in Homo sapiens (Human).